The following is a 274-amino-acid chain: 2,3,4,5-tetrahydropyridine-2,6-dicarboxylate N-succinyltransferase (274 aa).

The substrate site is built by R104 and D141.

Belongs to the transferase hexapeptide repeat family. As to quaternary structure, homotrimer.

It is found in the cytoplasm. It catalyses the reaction (S)-2,3,4,5-tetrahydrodipicolinate + succinyl-CoA + H2O = (S)-2-succinylamino-6-oxoheptanedioate + CoA. Its pathway is amino-acid biosynthesis; L-lysine biosynthesis via DAP pathway; LL-2,6-diaminopimelate from (S)-tetrahydrodipicolinate (succinylase route): step 1/3. The sequence is that of 2,3,4,5-tetrahydropyridine-2,6-dicarboxylate N-succinyltransferase from Shewanella putrefaciens (strain CN-32 / ATCC BAA-453).